The sequence spans 87 residues: Large ribosomal subunit protein eL33 (87 aa).

Belongs to the eukaryotic ribosomal protein eL33 family.

The sequence is that of Large ribosomal subunit protein eL33 from Pyrococcus abyssi (strain GE5 / Orsay).